Reading from the N-terminus, the 262-residue chain is Pimeloyl-[acyl-carrier protein] methyl ester esterase (262 aa).

Residues 15 to 242 (HLVLLHGWGL…AAHAPFISHP (228 aa)) enclose the AB hydrolase-1 domain. Substrate is bound by residues W22, 82–83 (SL), and 143–147 (FLALQ). The active-site Nucleophile is the S82. Residues D207 and H235 contribute to the active site. H235 contacts substrate.

The protein belongs to the AB hydrolase superfamily. Carboxylesterase BioH family. In terms of assembly, monomer.

The protein resides in the cytoplasm. The enzyme catalyses 6-carboxyhexanoyl-[ACP] methyl ester + H2O = 6-carboxyhexanoyl-[ACP] + methanol + H(+). It functions in the pathway cofactor biosynthesis; biotin biosynthesis. In terms of biological role, the physiological role of BioH is to remove the methyl group introduced by BioC when the pimeloyl moiety is complete. It allows to synthesize pimeloyl-ACP via the fatty acid synthetic pathway through the hydrolysis of the ester bonds of pimeloyl-ACP esters. The polypeptide is Pimeloyl-[acyl-carrier protein] methyl ester esterase (Shigella flexneri).